The sequence spans 115 residues: uncharacterized protein (115 aa).

The protein belongs to the transposase 34 family.

This is an uncharacterized protein from Sinorhizobium fredii (strain NBRC 101917 / NGR234).